The chain runs to 455 residues: MSFLIDSSIMITSQILFFGFGWLFFMRQLFKDYEIRQYVVQVIFSVTFAFSCTMFELIIFEILGVLNSSSRYFHWKMNLCVILLILVFMVPFYIGYFIVSNIRLLHKQRLLFSCLLWLTFMYFFWKLGDPFPILSPKHGILSIEQLISRVGVIGVTLMALLSGFGAVNCPYTYMSYFLRNVTDTDILALERRLLQTMDMIISKKKRMAMARRTMFQKGEVHNKPSGFWGMIKSVTTSASGSENLTLIQQEVDALEELSRQLFLETADLYATKERIEYSKTFKGKYFNFLGYFFSIYCVWKIFMATINIVFDRVGKTDPVTRGIEITVNYLGIQFDVKFWSQHISFILVGIIIVTSIRGLLITLTKFFYAISSSKSSNVIVLLLAQIMGMYFVSSVLLIRMSMPLEYRTIITEVLGELQFNFYHRWFDVIFLVSALSSILFLYLAHKQAPEKQMAP.

The next 5 membrane-spanning stretches (helical) occupy residues 5–25, 46–66, 79–99, 114–134, and 150–170; these read IDSS…WLFF, VTFA…LGVL, LCVI…YFIV, CLLW…FPIL, and VGVI…VNCP. N180 and N243 each carry an N-linked (GlcNAc...) asparagine glycan. 4 helical membrane passes run 290-310, 343-363, 378-398, and 425-445; these read GYFF…NIVF, ISFI…LITL, VIVL…VLLI, and WFDV…YLAH.

This sequence belongs to the Golgi pH regulator (TC 1.A.38) family. Homotrimer. Interacts with RABL3; the interaction stabilizes GPR89A. In terms of tissue distribution, ubiquitous.

It is found in the golgi apparatus membrane. It carries out the reaction iodide(out) = iodide(in). The catalysed reaction is chloride(in) = chloride(out). The enzyme catalyses bromide(in) = bromide(out). It catalyses the reaction fluoride(in) = fluoride(out). Its function is as follows. Voltage-gated channel that enables the transfer of monoatomic anions such as iodide, chloride, bromide and fluoride which may function in counter-ion conductance and participates in Golgi acidification. Plays a role in lymphocyte development, probably by acting as a RABL3 effector in hematopoietic cells. The chain is Golgi pH regulator A from Homo sapiens (Human).